A 1014-amino-acid chain; its full sequence is Poly [ADP-ribose] polymerase 1 (1014 aa).

Ala-2 carries the post-translational modification N-acetylalanine. The segment at 9-93 (YRVEYAKSGR…KVKKTAEAGG (85 aa)) adopts a PARP-type 1 zinc-finger fold. Zn(2+)-binding residues include Cys-21 and Cys-24. Phosphoserine is present on Ser-41. His-53 and Cys-56 together coordinate Zn(2+). N6-acetyllysine occurs at positions 97 and 105. Residues 113 to 203 (FAAEYAKSNR…ALKKQLPGVK (91 aa)) form a PARP-type 2 zinc finger. Zn(2+)-binding residues include Cys-125 and Cys-128. An N6-acetyllysine modification is found at Lys-131. Zn(2+)-binding residues include His-159 and Cys-162. 3 positions are modified to phosphoserine: Ser-177, Ser-179, and Ser-185. Residue Lys-192 forms a Glycyl lysine isopeptide (Lys-Gly) (interchain with G-Cter in SUMO2) linkage. The segment at 198-233 (QLPGVKSEGKRKGDEVDGVDEVAKKKSKKEKDKDSK) is disordered. A Glycyl lysine isopeptide (Lys-Gly) (interchain with G-Cter in SUMO1); alternate cross-link involves residue Lys-203. Residue Lys-203 forms a Glycyl lysine isopeptide (Lys-Gly) (interchain with G-Cter in SUMO2); alternate linkage. The span at 204–233 (SEGKRKGDEVDGVDEVAKKKSKKEKDKDSK) shows a compositional bias: basic and acidic residues. 2 consecutive short sequence motifs (nuclear localization signal) follow at residues 207-209 (KRK) and 221-226 (KKKSKK). The region spanning 225–359 (KKEKDKDSKL…VKKQDRIFPP (135 aa)) is the PADR1 zinc-binding domain. A Glycyl lysine isopeptide (Lys-Gly) (interchain with G-Cter in SUMO2) cross-link involves residue Lys-249. 2 positions are modified to phosphoserine: Ser-274 and Ser-277. The interval 290 to 332 (GALLPCEECSGQLVFKSDAYYCTGDVTAWTKCMVKTQTPNRKE) is zinc ribbon. Cys-295, Cys-298, Cys-311, and Cys-321 together coordinate Zn(2+). Residues 361–385 (TSASVAATPPPSTASAPAAVNSSAS) form a disordered region. The residue at position 364 (Ser-364) is a Phosphoserine. Phosphothreonine is present on Thr-368. The automodification domain stretch occupies residues 373 to 524 (TASAPAAVNS…GINKSEKRMK (152 aa)). Residues 385–476 (SADKPLSNMK…KSLQELFLAH (92 aa)) enclose the BRCT domain. The residue at position 387 (Asp-387) is a PolyADP-ribosyl aspartic acid. Glu-407, Glu-413, Glu-435, Glu-437, Glu-444, Glu-445, Glu-448, and Glu-456 each carry polyADP-ribosyl glutamic acid. Residue Lys-467 forms a Glycyl lysine isopeptide (Lys-Gly) (interchain with G-Cter in SUMO2) linkage. Glu-471 and Glu-484 each carry polyADP-ribosyl glutamic acid. Residue Lys-486 forms a Glycyl lysine isopeptide (Lys-Gly) (interchain with G-Cter in SUMO1); alternate linkage. Lys-486 is covalently cross-linked (Glycyl lysine isopeptide (Lys-Gly) (interchain with G-Cter in SUMO2); alternate). A polyADP-ribosyl glutamic acid mark is found at Glu-488 and Glu-491. Residues Ser-499, Ser-504, and Ser-507 each carry the ADP-ribosylserine modification. Residue Lys-512 forms a Glycyl lysine isopeptide (Lys-Gly) (interchain with G-Cter in SUMO2) linkage. 2 positions are modified to polyADP-ribosyl glutamic acid: Glu-513 and Glu-514. At Ser-519 the chain carries ADP-ribosylserine. Glu-520 carries the polyADP-ribosyl glutamic acid modification. Lys-521 is modified (N6-(ADP-ribosyl)lysine). Residue Lys-528 forms a Glycyl lysine isopeptide (Lys-Gly) (interchain with G-Cter in SUMO2) linkage. The region spanning 542–638 (SAHVLEKGGK…KNFTKYPKKF (97 aa)) is the WGR domain. Position 594 is a phosphothreonine; by PRKDC (Thr-594). N6-acetyllysine is present on residues Lys-600 and Lys-621. The PARP alpha-helical domain occupies 662-779 (KSKLPKPVQD…DIEVAYSLLR (118 aa)). Lys-748 participates in a covalent cross-link: Glycyl lysine isopeptide (Lys-Gly) (interchain with G-Cter in SUMO1); alternate. Residue Lys-748 forms a Glycyl lysine isopeptide (Lys-Gly) (interchain with G-Cter in SUMO2); alternate linkage. A phosphoserine mark is found at Ser-782 and Ser-786. The region spanning 788-1014 (DPIDVNYEKL…LKFNFKTSLW (227 aa)) is the PARP catalytic domain. Residues 862–864 (HGS), Gly-871, Arg-878, and Ser-904 each bind NAD(+). The active-site For poly [ADP-ribose] polymerase activity is the Glu-988.

The protein belongs to the ARTD/PARP family. Homodimer; PARP-type zinc-fingers from separate PARP1 molecules form a dimer module that specifically recognizes DNA strand breaks. Heterodimer; heterodimerizes with PARP2. Interacts (via the PARP catalytic domain) with HPF1. Interacts with NMNAT1. Interacts with nucleosomes; with a preference for nucleosomes containing H2A.X. Interacts with APTX. Component of a base excision repair (BER) complex, containing at least XRCC1, PARP1, PARP2, POLB and LRIG3. Interacts with SRY. The SWAP complex consists of NPM1, NCL, PARP1 and SWAP70. Interacts with TIAM2. Interacts with PARP3; leading to activate PARP1 in absence of DNA. Interacts (when poly-ADP-ribosylated) with CHD1L (via macro domain). Interacts with the DNA polymerase alpha catalytic subunit POLA1; this interaction functions as part of the control of replication fork progression. Interacts with EEF1A1 and TXK. Interacts with RNF4. Interacts with RNF146. Interacts with ZNF423. Interacts with APLF. Interacts with SNAI1 (via zinc fingers); the interaction requires SNAI1 to be poly-ADP-ribosylated and non-phosphorylated (active) by GSK3B. Interacts (when poly-ADP-ribosylated) with PARP9. Interacts with NR4A3; activates PARP1 by improving acetylation of PARP1 and suppressing the interaction between PARP1 and SIRT1. Interacts (via catalytic domain) with PUM3; the interaction inhibits the poly-ADP-ribosylation activity of PARP1 and the degradation of PARP1 by CASP3 following genotoxic stress. Interacts with ZNF365. Interacts with RRP1B. Interacts with TIMELESS; the interaction is direct. Interacts with CGAS; leading to impede the formation of the PARP1-TIMELESS complex. Interacts with KHDC3L, the interaction is increased following the formation of DNA double-strand breaks. Interacts (when auto-poly-ADP-ribosylated) with XRCC1; leading to inhibit PARP1 ADP-ribosyltransferase activity. Interacts with SPINDOC; promoting PARP1 ADP-ribosyltransferase activity. Interacts with BANF1; leading to inhibit PARP1 ADP-ribosyltransferase activity in response to oxidative DNA damage. Interacts (when sumoylated and ubiquitinated) with VCP/p97; leading to its extraction from chromatin. Interacts with YARS1; Interacts with PACMP micropeptide; interaction. Interacts with PACMP micropeptide; Interacts with PACMP micropeptide; interaction. Interacts (when poly-ADP-ribosylated) with isoform 1 of MACROH2A1; MACROH2A1 specifically binds to poly-ADP-ribose chains and inhibits PARP1 activity, limiting the consumption of nuclear NAD(+). Interacts with CARM1; promoting recruitment to replication forks. Interacts with RECQL. Interacts with ZNF32; the interaction reshapes ZNF432 interacting proteins. Interacts with TPRN; TPRN interacts with a number of DNA damage response proteins, is recruited to sites of DNA damage and may play a role in DNA damage repair. As to quaternary structure, interacts (when auto-poly-ADP-ribosylated) with AIFM1. In terms of assembly, (Microbial infection) Interacts with human herpesvirus 8 (KSHV) protein RTA/ORF50; this interaction negatively regulates RTA/ORF50 transactivation activity. Poly-ADP-ribosylated on serine, glutamate and aspartate residues by autocatalysis. Auto-ADP-ribosylation on serine takes place following interaction with HPF1. Auto poly-ADP-ribosylation on serine residues promotes its dissociation from chromatin. Poly-ADP-ribosylated by PARP2; poly-ADP-ribosylation mediates the recruitment of CHD1L to DNA damage sites. Mono-ADP-ribosylated at Lys-521 by SIRT6 in response to oxidative stress, promoting recruitment to double-strand breaks (DSBs) sites. Post-translationally, phosphorylated at Thr-594 by PRKDC in response to DNA damage following virus infection, promoting its translocation to the cytosol. Phosphorylated by TXK. In terms of processing, S-nitrosylated, leading to inhibit transcription regulation activity. Proteolytically cleaved by caspase-3 (CASP3) and caspase-7 (CASP7) in response to apoptosis to generate the Poly [ADP-ribose] polymerase 1, processed N-terminus and Poly [ADP-ribose] polymerase 1, processed C-terminus forms. CASP3-mediated cleavage is promoted by the TP53/p53-induced long non-coding RNA SPARCLE, which binds PARP1 in response to genotoxic stress. Post-translationally, sumoylated with SUMO1 or SUMO2 by PIAS4 following prolonged residence (trapping) to chromatin. Sumoylation promotes ubiquitination by RNF4 and removal from chromatin by VCP/p97. In terms of processing, ubiquitinated by RNF4 following sumoylation by PIAS4 in response to prolonged residence (trapping) to chromatin. Ubiquitination promotes removal from chromatin by VCP/p97.

It localises to the chromosome. The protein resides in the nucleus. Its subcellular location is the nucleolus. It is found in the cytoplasm. The protein localises to the cytosol. The enzyme catalyses NAD(+) + (ADP-D-ribosyl)n-acceptor = nicotinamide + (ADP-D-ribosyl)n+1-acceptor + H(+).. It catalyses the reaction L-seryl-[protein] + NAD(+) = O-(ADP-D-ribosyl)-L-seryl-[protein] + nicotinamide + H(+). It carries out the reaction L-aspartyl-[protein] + NAD(+) = 4-O-(ADP-D-ribosyl)-L-aspartyl-[protein] + nicotinamide. The catalysed reaction is L-glutamyl-[protein] + NAD(+) = 5-O-(ADP-D-ribosyl)-L-glutamyl-[protein] + nicotinamide. The enzyme catalyses L-tyrosyl-[protein] + NAD(+) = O-(ADP-D-ribosyl)-L-tyrosyl-[protein] + nicotinamide + H(+). It catalyses the reaction L-histidyl-[protein] + NAD(+) = N(tele)-(ADP-D-ribosyl)-L-histidyl-[protein] + nicotinamide + H(+). ADP-ribosyltransferase activity is regulated via an allosteric activation mechanism. In absence of activation signal, PARP1 is autoinhibited by the PARP alpha-helical domain (also named HD region), which prevents effective NAD(+)-binding. Activity is highly stimulated by signals, such as DNA strand breaks. Binding to damaged DNA unfolds the PARP alpha-helical domain, relieving autoinhibition. Poly-ADP-ribosyltransferase activity is tightly regulated and PARP1 is removed from damaged chromatin following initial poly-ADP-ribosylation of chromatin to avoid prolonged residence (trapping) that has cytotoxic consequences. A number of factors (VCP/p97) or post-translational modifications (auto-poly-ADP-ribosylation or ubiquitination) promote PARP1 removal from chromatin. ADP-ribosyltransferase activity is inhibited by a number of PARP inhibitors (PARPi) compounds, that are used the treatment of breast or ovarian cancers that have defects in DNA repair by homologous recombination. PARPi molecules can be classified in three categories: type I compounds (EB-47, UKTT15 and BAD) that promote allosteric retention of PARP1 on DNA, type II inhibitors (talazoparib and olaparib) that mediate a non-allosteric inhibition, and type III inhibitors (rucaparib, niraparib, and veliparib) that promote allosteric release from DNA. Trapping to chromatin by PARPi molecules triggers activation of the cGAS-STING pathway. In terms of biological role, poly-ADP-ribosyltransferase that mediates poly-ADP-ribosylation of proteins and plays a key role in DNA repair. Mediates glutamate, aspartate, serine, histidine or tyrosine ADP-ribosylation of proteins: the ADP-D-ribosyl group of NAD(+) is transferred to the acceptor carboxyl group of target residues and further ADP-ribosyl groups are transferred to the 2'-position of the terminal adenosine moiety, building up a polymer with an average chain length of 20-30 units. Serine ADP-ribosylation of proteins constitutes the primary form of ADP-ribosylation of proteins in response to DNA damage. Specificity for the different amino acids is conferred by interacting factors, such as HPF1 and NMNAT1. Following interaction with HPF1, catalyzes serine ADP-ribosylation of target proteins; HPF1 confers serine specificity by completing the PARP1 active site. Also catalyzes tyrosine ADP-ribosylation of target proteins following interaction with HPF1. Following interaction with NMNAT1, catalyzes glutamate and aspartate ADP-ribosylation of target proteins; NMNAT1 confers glutamate and aspartate specificity. PARP1 initiates the repair of DNA breaks: recognizes and binds DNA breaks within chromatin and recruits HPF1, licensing serine ADP-ribosylation of target proteins, such as histones (H2BS6ADPr and H3S10ADPr), thereby promoting decompaction of chromatin and the recruitment of repair factors leading to the reparation of DNA strand breaks. HPF1 initiates serine ADP-ribosylation but restricts the polymerase activity of PARP1 in order to limit the length of poly-ADP-ribose chains. In addition to base excision repair (BER) pathway, also involved in double-strand breaks (DSBs) repair: together with TIMELESS, accumulates at DNA damage sites and promotes homologous recombination repair by mediating poly-ADP-ribosylation. Mediates the poly-ADP-ribosylation of a number of proteins, including itself, APLF, CHFR, RPA1 and NFAT5. In addition to proteins, also able to ADP-ribosylate DNA: catalyzes ADP-ribosylation of DNA strand break termini containing terminal phosphates and a 2'-OH group in single- and double-stranded DNA, respectively. Required for PARP9 and DTX3L recruitment to DNA damage sites. PARP1-dependent PARP9-DTX3L-mediated ubiquitination promotes the rapid and specific recruitment of 53BP1/TP53BP1, UIMC1/RAP80, and BRCA1 to DNA damage sites. PARP1-mediated DNA repair in neurons plays a role in sleep: senses DNA damage in neurons and promotes sleep, facilitating efficient DNA repair. In addition to DNA repair, also involved in other processes, such as transcription regulation, programmed cell death, membrane repair, adipogenesis and innate immunity. Acts as a repressor of transcription: binds to nucleosomes and modulates chromatin structure in a manner similar to histone H1, thereby altering RNA polymerase II. Acts both as a positive and negative regulator of transcription elongation, depending on the context. Acts as a positive regulator of transcription elongation by mediating poly-ADP-ribosylation of NELFE, preventing RNA-binding activity of NELFE and relieving transcription pausing. Acts as a negative regulator of transcription elongation in response to DNA damage by catalyzing poly-ADP-ribosylation of CCNT1, disrupting the phase separation activity of CCNT1 and subsequent activation of CDK9. Involved in replication fork progression following interaction with CARM1: mediates poly-ADP-ribosylation at replication forks, slowing fork progression. Poly-ADP-ribose chains generated by PARP1 also play a role in poly-ADP-ribose-dependent cell death, a process named parthanatos. Also acts as a negative regulator of the cGAS-STING pathway. Acts by mediating poly-ADP-ribosylation of CGAS: PARP1 translocates into the cytosol following phosphorylation by PRKDC and catalyzes poly-ADP-ribosylation and inactivation of CGAS. Acts as a negative regulator of adipogenesis: catalyzes poly-ADP-ribosylation of histone H2B on 'Glu-35' (H2BE35ADPr) following interaction with NMNAT1, inhibiting phosphorylation of H2B at 'Ser-36' (H2BS36ph), thereby blocking expression of pro-adipogenetic genes. Involved in the synthesis of ATP in the nucleus, together with NMNAT1, PARG and NUDT5. Nuclear ATP generation is required for extensive chromatin remodeling events that are energy-consuming. Its function is as follows. Promotes AIFM1-mediated apoptosis. This form, which translocates into the cytoplasm following cleavage by caspase-3 (CASP3) and caspase-7 (CASP7) in response to apoptosis, is auto-poly-ADP-ribosylated and serves as a poly-ADP-ribose carrier to induce AIFM1-mediated apoptosis. Functionally, this cleavage form irreversibly binds to DNA breaks and interferes with DNA repair, promoting DNA damage-induced apoptosis. This chain is Poly [ADP-ribose] polymerase 1, found in Homo sapiens (Human).